Consider the following 660-residue polypeptide: Macrolide export ATP-binding/permease protein MacB (660 aa).

An ABC transporter domain is found at 10 to 248; that stretch reads LVLENIVRKF…TDSQALYGKQ (239 aa). 46–53 is an ATP binding site; sequence GASGSGKS. 4 consecutive transmembrane segments (helical) span residues 285–305, 532–552, 593–613, and 625–645; these read FLTM…VALG, ILTL…GIGV, VIGG…FLLF, and SIIL…FSPA.

The protein belongs to the ABC transporter superfamily. Macrolide exporter (TC 3.A.1.122) family. Homodimer.

The protein resides in the cell inner membrane. Functionally, non-canonical ABC transporter that contains transmembrane domains (TMD), which form a pore in the inner membrane, and an ATP-binding domain (NBD), which is responsible for energy generation. Confers resistance against macrolides. This is Macrolide export ATP-binding/permease protein MacB from Bartonella henselae (strain ATCC 49882 / DSM 28221 / CCUG 30454 / Houston 1) (Rochalimaea henselae).